The chain runs to 220 residues: uncharacterized protein (220 aa).

The interval 1 to 50 (MTDDVRDVNTETTDATEVAEIDSAAGEAGDSATEAFDTDSATESTAQKGQ) is disordered. Positions 39–48 (DSATESTAQK) are enriched in polar residues. Residues 65–85 (VPVILILLMLISGGATGWLYL) traverse the membrane as a helical segment.

It to M.tuberculosis Rv1363c.

It is found in the membrane. This is an uncharacterized protein from Mycobacterium tuberculosis (strain CDC 1551 / Oshkosh).